The chain runs to 460 residues: Cyclin-T1-2 (460 aa).

Disordered stretches follow at residues 1-20 and 285-345; these read MDEA…SSVA and QPIS…QDHS. Positions 314–324 are enriched in basic and acidic residues; it reads SDDHSVHDGSR. Residues 332 to 345 show a composition bias toward polar residues; it reads NSESEAQKNLQDHS.

This sequence belongs to the cyclin family. Cyclin T subfamily.

The sequence is that of Cyclin-T1-2 (CYCT1-2) from Arabidopsis thaliana (Mouse-ear cress).